A 341-amino-acid polypeptide reads, in one-letter code: Beta-hexosaminidase (341 aa).

Substrate is bound by residues Asp61, Arg69, Arg134, and 164-165; that span reads KH. The Proton donor/acceptor role is filled by His177. Asp249 (nucleophile) is an active-site residue.

Belongs to the glycosyl hydrolase 3 family. NagZ subfamily.

It localises to the cytoplasm. The catalysed reaction is Hydrolysis of terminal non-reducing N-acetyl-D-hexosamine residues in N-acetyl-beta-D-hexosaminides.. It functions in the pathway cell wall biogenesis; peptidoglycan recycling. Plays a role in peptidoglycan recycling by cleaving the terminal beta-1,4-linked N-acetylglucosamine (GlcNAc) from peptide-linked peptidoglycan fragments, giving rise to free GlcNAc, anhydro-N-acetylmuramic acid and anhydro-N-acetylmuramic acid-linked peptides. The chain is Beta-hexosaminidase from Shewanella frigidimarina (strain NCIMB 400).